A 360-amino-acid chain; its full sequence is Magnesium-protoporphyrin IX monomethyl ester [oxidative] cyclase (360 aa).

The protein belongs to the AcsF family. It depends on Fe cation as a cofactor.

The enzyme catalyses Mg-protoporphyrin IX 13-monomethyl ester + 3 NADPH + 3 O2 + 2 H(+) = 3,8-divinyl protochlorophyllide a + 3 NADP(+) + 5 H2O. It functions in the pathway porphyrin-containing compound metabolism; chlorophyll biosynthesis (light-independent). Catalyzes the formation of the isocyclic ring in chlorophyll biosynthesis. Mediates the cyclase reaction, which results in the formation of divinylprotochlorophyllide (Pchlide) characteristic of all chlorophylls from magnesium-protoporphyrin IX 13-monomethyl ester (MgPMME). This chain is Magnesium-protoporphyrin IX monomethyl ester [oxidative] cyclase, found in Synechococcus sp. (strain WH7803).